The primary structure comprises 537 residues: uncharacterized protein (537 aa).

Disordered stretches follow at residues 1–33 (MEPG…ILAF), 71–98 (SSPP…RKRQ), 197–220 (SHNN…SEEK), and 516–537 (GRQR…EEQN). Ser72 is subject to Phosphoserine. The segment covering 88-98 (SRVDSEARKRQ) has biased composition (basic and acidic residues). A compositionally biased stretch (polar residues) spans 197–214 (SHNNMASSNTQSNTQLSE). A compositionally biased stretch (basic residues) spans 516-529 (GRQRSSRYKSHVHK).

It belongs to the NAD kinase family.

This is an uncharacterized protein from Schizosaccharomyces pombe (strain 972 / ATCC 24843) (Fission yeast).